Reading from the N-terminus, the 124-residue chain is Small ribosomal subunit protein uS12 (124 aa).

The residue at position 89 (D89) is a 3-methylthioaspartic acid.

It belongs to the universal ribosomal protein uS12 family. In terms of assembly, part of the 30S ribosomal subunit. Contacts proteins S8 and S17. May interact with IF1 in the 30S initiation complex.

Functionally, with S4 and S5 plays an important role in translational accuracy. In terms of biological role, interacts with and stabilizes bases of the 16S rRNA that are involved in tRNA selection in the A site and with the mRNA backbone. Located at the interface of the 30S and 50S subunits, it traverses the body of the 30S subunit contacting proteins on the other side and probably holding the rRNA structure together. The combined cluster of proteins S8, S12 and S17 appears to hold together the shoulder and platform of the 30S subunit. The polypeptide is Small ribosomal subunit protein uS12 (Buchnera aphidicola subsp. Cinara cedri (strain Cc)).